The chain runs to 208 residues: Putative 3-methyladenine DNA glycosylase (208 aa).

This sequence belongs to the DNA glycosylase MPG family.

This is Putative 3-methyladenine DNA glycosylase from Lactobacillus delbrueckii subsp. bulgaricus (strain ATCC 11842 / DSM 20081 / BCRC 10696 / JCM 1002 / NBRC 13953 / NCIMB 11778 / NCTC 12712 / WDCM 00102 / Lb 14).